A 201-amino-acid chain; its full sequence is Twist-related protein 1 (201 aa).

The segment covering 1–18 (MMQDVSSSPVSPADDSLS) has biased composition (low complexity). The disordered stretch occupies residues 1-106 (MMQDVSSSPV…GGGSPQSYEE (106 aa)). The span at 34-43 (RGGRKRRSSR) shows a compositional bias: basic residues. Gly residues-rich tracts occupy residues 46-65 (AGGG…GGDE) and 80-100 (GCGG…GGGS). A bHLH domain is found at 109–160 (TQRVMANVRERQRTQSLNEAFAALPKIIPTLPSDKLSKIQTLKLAARYIDFL). Positions 162–190 (QVLQSDELDSKMASYVAHERLSYAFSVWR) are sufficient for transactivation activity.

Efficient DNA binding requires dimerization with another bHLH protein. Homodimer or heterodimer with E proteins such as TCF3. ID1 binds preferentially to TCF3 but does not interact efficiently with TWIST1 so ID1 levels control the amount of TCF3 available to dimerize with TWIST and thus determine the type of dimer formed.

Its subcellular location is the nucleus. Acts as a transcriptional regulator. Inhibits myogenesis by sequestrating E proteins, inhibiting trans-activation by MEF2, and inhibiting DNA-binding by MYOD1 through physical interaction. This interaction probably involves the basic domains of both proteins. Also represses expression of pro-inflammatory cytokines such as TNFA and IL1B. Regulates cranial suture patterning and fusion. Activates transcription as a heterodimer with E proteins. Regulates gene expression differentially, depending on dimer composition. Homodimers induce expression of FGFR2 and POSTN while heterodimers repress FGFR2 and POSTN expression and induce THBS1 expression. Heterodimerization is also required for osteoblast differentiation. Represses the activity of the circadian transcriptional activator: NPAS2-BMAL1 heterodimer. The polypeptide is Twist-related protein 1 (TWIST1) (Pan troglodytes (Chimpanzee)).